We begin with the raw amino-acid sequence, 230 residues long: Somatolactin (230 aa).

The N-terminal stretch at 1-23 (MMTAVKQSGVWAVLLWPYLLAVS) is a signal peptide. 3 cysteine pairs are disulfide-bonded: C28–C38, C88–C204, and C221–C229. N34 and N144 each carry an N-linked (GlcNAc...) asparagine glycan.

This sequence belongs to the somatotropin/prolactin family. As to expression, pituitary gland.

Its subcellular location is the secreted. In Solea senegalensis (Senegalese sole), this protein is Somatolactin.